The following is a 696-amino-acid chain: Elongation factor G (696 aa).

In terms of domain architecture, tr-type G spans 8 to 286 (EDVRNIGIAA…AVVAYLPAPT (279 aa)). Residues 17 to 24 (AHIDAGKT), 81 to 85 (DTPGH), and 135 to 138 (NKMD) contribute to the GTP site.

The protein belongs to the TRAFAC class translation factor GTPase superfamily. Classic translation factor GTPase family. EF-G/EF-2 subfamily.

The protein resides in the cytoplasm. Functionally, catalyzes the GTP-dependent ribosomal translocation step during translation elongation. During this step, the ribosome changes from the pre-translocational (PRE) to the post-translocational (POST) state as the newly formed A-site-bound peptidyl-tRNA and P-site-bound deacylated tRNA move to the P and E sites, respectively. Catalyzes the coordinated movement of the two tRNA molecules, the mRNA and conformational changes in the ribosome. The polypeptide is Elongation factor G (Sulfurimonas denitrificans (strain ATCC 33889 / DSM 1251) (Thiomicrospira denitrificans (strain ATCC 33889 / DSM 1251))).